We begin with the raw amino-acid sequence, 284 residues long: Riboflavin transporter (284 aa).

2 consecutive EamA domains span residues 2 to 129 (VAAC…LIII) and 141 to 273 (LLPI…SLYL). 8 consecutive transmembrane segments (helical) span residues 26–46 (SVIIAFWQYVIALVLTLPLLV), 58–78 (FGLHVMRVALAAAGVQVWIYA), 82–102 (VPIWQVVALSMTSPFFVILCA), 115–135 (LLTTFTGFIGALIIIAPWSDS), 136–156 (YTVYSLLPILAAALWAGYSVM), 167–187 (ASISAYMLVLLTPINAALWLA), 195–215 (ITAPDVEIWSILIVIGAFTAL), and 247–267 (GWIVFAAAPSINFWPGAALII).

Belongs to the drug/metabolite transporter (DMT) superfamily. 10 TMS drug/metabolite exporter (DME) (TC 2.A.7.3) family.

It localises to the cell membrane. Its function is as follows. Transports riboflavin into the cell. The polypeptide is Riboflavin transporter (Brucella anthropi (strain ATCC 49188 / DSM 6882 / CCUG 24695 / JCM 21032 / LMG 3331 / NBRC 15819 / NCTC 12168 / Alc 37) (Ochrobactrum anthropi)).